The chain runs to 740 residues: Ion-translocating oxidoreductase complex subunit C (740 aa).

2 4Fe-4S ferredoxin-type domains span residues 369–397 (GEPQ…QQLY) and 407–436 (KATT…VQYF). [4Fe-4S] cluster-binding residues include cysteine 377, cysteine 380, cysteine 383, cysteine 387, cysteine 416, cysteine 419, cysteine 422, and cysteine 426. The tract at residues 602 to 717 (KLEQQQANAE…PEEQVDPRKA (116 aa)) is disordered. Low complexity-rich tracts occupy residues 605-615 (QQQANAEPEQQ) and 637-647 (QQQANAEPEQQ).

The protein belongs to the 4Fe4S bacterial-type ferredoxin family. RnfC subfamily. The complex is composed of six subunits: RsxA, RsxB, RsxC, RsxD, RsxE and RsxG. [4Fe-4S] cluster serves as cofactor.

The protein resides in the cell inner membrane. Its function is as follows. Part of a membrane-bound complex that couples electron transfer with translocation of ions across the membrane. Required to maintain the reduced state of SoxR. In Escherichia coli (strain ATCC 8739 / DSM 1576 / NBRC 3972 / NCIMB 8545 / WDCM 00012 / Crooks), this protein is Ion-translocating oxidoreductase complex subunit C.